The sequence spans 140 residues: Nucleoside diphosphate kinase (140 aa).

The ATP site is built by K11, F59, R87, T93, R104, and N114. H117 serves as the catalytic Pros-phosphohistidine intermediate.

The protein belongs to the NDK family. In terms of assembly, homotetramer. It depends on Mg(2+) as a cofactor.

It localises to the cytoplasm. It carries out the reaction a 2'-deoxyribonucleoside 5'-diphosphate + ATP = a 2'-deoxyribonucleoside 5'-triphosphate + ADP. The catalysed reaction is a ribonucleoside 5'-diphosphate + ATP = a ribonucleoside 5'-triphosphate + ADP. Functionally, major role in the synthesis of nucleoside triphosphates other than ATP. The ATP gamma phosphate is transferred to the NDP beta phosphate via a ping-pong mechanism, using a phosphorylated active-site intermediate. In Rhodopseudomonas palustris (strain BisB18), this protein is Nucleoside diphosphate kinase.